We begin with the raw amino-acid sequence, 352 residues long: GTPase Obg (352 aa).

Positions 1–159 (MHFLDQAKIY…MWVWLRLKLL (159 aa)) constitute an Obg domain. An OBG-type G domain is found at 160-327 (ADVGLLGLPN…LLDAVLGYLP (168 aa)). Residues 166–173 (GLPNAGKS), 191–195 (FTTLV), 212–215 (DIPG), 279–282 (NKLD), and 308–310 (SGA) contribute to the GTP site. Mg(2+) contacts are provided by Ser-173 and Thr-193. The tract at residues 329-352 (STSTETKGSEVEEVDEEGGEWSPI) is disordered. Over residues 339-352 (VEEVDEEGGEWSPI) the composition is skewed to acidic residues.

The protein belongs to the TRAFAC class OBG-HflX-like GTPase superfamily. OBG GTPase family. As to quaternary structure, monomer. Requires Mg(2+) as cofactor.

It localises to the cytoplasm. An essential GTPase which binds GTP, GDP and possibly (p)ppGpp with moderate affinity, with high nucleotide exchange rates and a fairly low GTP hydrolysis rate. Plays a role in control of the cell cycle, stress response, ribosome biogenesis and in those bacteria that undergo differentiation, in morphogenesis control. In Erythrobacter litoralis (strain HTCC2594), this protein is GTPase Obg.